The sequence spans 404 residues: Histidine--tRNA ligase (404 aa).

Belongs to the class-II aminoacyl-tRNA synthetase family.

The protein localises to the cytoplasm. The enzyme catalyses tRNA(His) + L-histidine + ATP = L-histidyl-tRNA(His) + AMP + diphosphate + H(+). This is Histidine--tRNA ligase from Nanoarchaeum equitans (strain Kin4-M).